Reading from the N-terminus, the 450-residue chain is Probable ECA polymerase (450 aa).

11 helical membrane passes run 6–26 (FSGL…LTWF), 37–57 (VFFS…TSVL), 63–83 (VGVA…CFYA), 118–138 (VILM…NGFL), 155–175 (GVAL…VYFL), 181–201 (AWLF…MIVG), 207–227 (IIIA…ISLW), 228–248 (MLAA…LKRY), 341–361 (LVVM…GLII), 378–398 (YKAA…IVLA), and 410–430 (VFFI…YWLF).

It belongs to the WzyE family. In terms of assembly, probably part of a complex composed of WzxE, WzyE and WzzE.

It localises to the cell inner membrane. The protein operates within bacterial outer membrane biogenesis; enterobacterial common antigen biosynthesis. In terms of biological role, probably involved in the polymerization of enterobacterial common antigen (ECA) trisaccharide repeat units. The chain is Probable ECA polymerase from Shigella flexneri.